The primary structure comprises 348 residues: D-alanine--D-alanine ligase (348 aa).

An ATP-grasp domain is found at 132 to 334; that stretch reads KRVLESADIP…YAELIEELVR (203 aa). 162 to 217 serves as a coordination point for ATP; it reads EAVLSYPVFVKPANMGSSVGISKAESEEELRAAILLALTYDSRILIEQGVLAREIE. Residues D288, E301, and N303 each coordinate Mg(2+).

The protein belongs to the D-alanine--D-alanine ligase family. Mg(2+) is required as a cofactor. It depends on Mn(2+) as a cofactor.

Its subcellular location is the cytoplasm. The enzyme catalyses 2 D-alanine + ATP = D-alanyl-D-alanine + ADP + phosphate + H(+). The protein operates within cell wall biogenesis; peptidoglycan biosynthesis. In terms of biological role, cell wall formation. The sequence is that of D-alanine--D-alanine ligase from Streptococcus equi subsp. zooepidemicus (strain MGCS10565).